Here is a 179-residue protein sequence, read N- to C-terminus: Ribosome maturation factor RimM (179 aa).

The region spanning 102 to 179 (DGEYYWYQLE…EMKVDWDADF (78 aa)) is the PRC barrel domain.

The protein belongs to the RimM family. In terms of assembly, binds ribosomal protein uS19.

It localises to the cytoplasm. An accessory protein needed during the final step in the assembly of 30S ribosomal subunit, possibly for assembly of the head region. Essential for efficient processing of 16S rRNA. May be needed both before and after RbfA during the maturation of 16S rRNA. It has affinity for free ribosomal 30S subunits but not for 70S ribosomes. The sequence is that of Ribosome maturation factor RimM from Pseudomonas savastanoi pv. phaseolicola (strain 1448A / Race 6) (Pseudomonas syringae pv. phaseolicola (strain 1448A / Race 6)).